The chain runs to 609 residues: MRVLYLHTERFSWEVKEPALDIRDEPVSGGASNALVVFTTVERGDVPEEGFLRQIARDIVEVAEKVKASSIVIYPYAHLSNELARPYAAREIVNKLYEVVKSEFRGEVYKAPFGYYKAFELKCLGHPLSELSRSFKPGDSRAEKKAEERRDLYIVITPSGEEHDPAKFNYDGYEDLKILVEKEVFKRELGGGSEPRYLEYMRKFGFEWEPMSDVGHMRYAPEATLMMELVEDYAYAVAKSLGIPVFKIRGTNMFKLSERAIESHARLFGERLYIVESDTDLILRYAACFQQFAMVKDWVISYRQLPFGMLEVADSYRLEQPGETVLLFRLRRFYMPDLHIFTKDLAEAMEVTFRLHEAIFREIGKLGRTYVSLYNVTEDFYKAHRQYLVELARREGKPILVRVLPGQKYYWVLNVEFHIIDELGRPREIATFQIDVGNAQRFGIKYVDENNQTRYPVIIHTAILGSVERYLYAVFDTLARAEKEGKAPRLPTWLSPVQVRIIPITRDNLKYAVEVADKFEAEGIRVDVDDRDETLSKRIRDAEVAWVPYICVVGSKEEAEGVVSVRERGGGQYRVKPEDLIKKIREDVRGYPNRPLYMPRFLSQRPTRS.

The editing domain stretch occupies residues 1–143; the sequence is MRVLYLHTER…SFKPGDSRAE (143 aa). Catalytic stretches follow at residues 195–491 and 196–491; these read PRYL…PRLP and RYLE…PRLP. Zn(2+) is bound by residues Cys288, His339, and His460.

The protein belongs to the class-II aminoacyl-tRNA synthetase family. In terms of assembly, homodimer. The cofactor is Zn(2+).

Its subcellular location is the cytoplasm. It carries out the reaction tRNA(Thr) + L-threonine + ATP = L-threonyl-tRNA(Thr) + AMP + diphosphate + H(+). Functionally, catalyzes the attachment of threonine to tRNA(Thr) in a two-step reaction: L-threonine is first activated by ATP to form Thr-AMP and then transferred to the acceptor end of tRNA(Thr). Also edits incorrectly charged L-seryl-tRNA(Thr). The sequence is that of Threonine--tRNA ligase from Pyrobaculum neutrophilum (strain DSM 2338 / JCM 9278 / NBRC 100436 / V24Sta) (Thermoproteus neutrophilus).